A 463-amino-acid chain; its full sequence is Interferon-inducible GTPase 5 (463 aa).

Residues 52 to 234 form the IRG-type G domain; that stretch reads TRLEVGVTGE…PMLVTTWEHD (183 aa). Residues 61–68, 86–90, 168–170, and 215–217 contribute to the GTP site; these read ESGAGKSS, TGVVE, KVD, and SNL. 2 positions are modified to phosphoserine: Ser-246 and Ser-303. Residues 409 to 438 form a disordered region; the sequence is QGEVSLEAAGDNAVEKRSSGEGTSEEAPLS.

This sequence belongs to the TRAFAC class dynamin-like GTPase superfamily. IRG family.

The protein resides in the cell projection. It is found in the cilium. Its subcellular location is the flagellum. The protein localises to the lipid droplet. It carries out the reaction GTP + H2O = GDP + phosphate + H(+). Required for sperm motility and therefore male fertility, via positive regulation of spermatozoa fibrous sheath formation. The sequence is that of Interferon-inducible GTPase 5 (Irgc) from Rattus norvegicus (Rat).